The following is a 169-amino-acid chain: MSQDFVEIAKIGATYKLNGELNLYPLANSIETLLSYGDWYIQLPATNVWQQLKGESVLKRADKVYIKLANINNADTAKKYVNALIGVPKRALPQLAEDEVYFKDLIGCSVKNINNDSFGVVVDIIETDANEVLVCKEDNSEYLIPYVKQYIVSEDLNSKKIVVDWEYDY.

Residues 97 to 169 (EDEVYFKDLI…KIVVDWEYDY (73 aa)) form the PRC barrel domain.

It belongs to the RimM family. Binds ribosomal protein uS19.

The protein localises to the cytoplasm. Its function is as follows. An accessory protein needed during the final step in the assembly of 30S ribosomal subunit, possibly for assembly of the head region. Essential for efficient processing of 16S rRNA. May be needed both before and after RbfA during the maturation of 16S rRNA. It has affinity for free ribosomal 30S subunits but not for 70S ribosomes. The polypeptide is Ribosome maturation factor RimM (Francisella tularensis subsp. tularensis (strain FSC 198)).